Reading from the N-terminus, the 263-residue chain is Granzyme K (263 aa).

The signal sequence occupies residues 1–21 (MRFSSWALVSLVAGVYMSSEC). Residues 22–25 (FHTE) constitute a propeptide, activation peptide. Residues 26–258 (IIGGREVQPH…YQTWIKSKLA (233 aa)) form the Peptidase S1 domain. C51 and C67 are joined by a disulfide. Active-site charge relay system residues include H66 and D115. Cystine bridges form between C148-C219, C180-C198, and C209-C233. S213 serves as the catalytic Charge relay system.

This sequence belongs to the peptidase S1 family. Granzyme subfamily.

It is found in the cytoplasmic granule. The sequence is that of Granzyme K (Gzmk) from Mus musculus (Mouse).